The sequence spans 533 residues: MLLSGMRESQGTEVSLRTISTQDLRLLVSFAYSGVVRARWPGLLRAAQAALQYQSSSCLDLCQKGLARGLSPARCLALFPMAEAPGLERLWSKARHYLLTHLPAVALCPAFPSLPAACLAELLDSDELHVQEEFEAFVAARCWLAANPETQESEAKALLRCVRFGRMSTRELRRVRAAGLLPPLTPDLLHQLMVEADVPGQERRREPDRALVVIGGDGLRPDMALRQPSRAVWWARAFRCGVGLVRTVEWGQLPALPAPGRFRHGAASLAGSELYVCGGQDFYSHSNTLASTLRWEPSQEDWEEMAPLSQARSLFSLVALDGKLYALGGRHNDVALDSVETYNPELNVWRPAPALPAPCFAHAAAILEGQLYVSGGCGGTGQYLASLMHYDPKLEKPGTFLSPMGVPRAGHVMAALGGRLYVAGGLGETEDLLSFEAYELRTDSWTHLAPLPSPHVGAASAVLQGELLVLGGYSHRTYALSHLIHAYCPGLGRWLCLGTLPRPRAEMPACILTLPAVQHIALVPTPHQTKPAG.

Kelch repeat units follow at residues 210 to 258, 273 to 322, 323 to 369, 371 to 418, 419 to 465, and 467 to 514; these read ALVV…ALPA, ELYV…ALDG, KLYA…ILEG, LYVS…ALGG, RLYV…VLQG, and LLVL…ILTL.

The protein is Kelch-like protein 33 (KLHL33) of Homo sapiens (Human).